We begin with the raw amino-acid sequence, 121 residues long: Large ribosomal subunit protein uL18 (121 aa).

This sequence belongs to the universal ribosomal protein uL18 family. In terms of assembly, part of the 50S ribosomal subunit; part of the 5S rRNA/L5/L18/L25 subcomplex. Contacts the 5S and 23S rRNAs.

This is one of the proteins that bind and probably mediate the attachment of the 5S RNA into the large ribosomal subunit, where it forms part of the central protuberance. This Pelobacter propionicus (strain DSM 2379 / NBRC 103807 / OttBd1) protein is Large ribosomal subunit protein uL18.